The following is a 383-amino-acid chain: Succinyl-diaminopimelate desuccinylase (383 aa).

His74 is a Zn(2+) binding site. Asp76 is an active-site residue. Asp107 lines the Zn(2+) pocket. Glu141 (proton acceptor) is an active-site residue. Residues Glu142, Glu170, and His356 each contribute to the Zn(2+) site.

The protein belongs to the peptidase M20A family. DapE subfamily. As to quaternary structure, homodimer. Requires Zn(2+) as cofactor. The cofactor is Co(2+).

The enzyme catalyses N-succinyl-(2S,6S)-2,6-diaminopimelate + H2O = (2S,6S)-2,6-diaminopimelate + succinate. It functions in the pathway amino-acid biosynthesis; L-lysine biosynthesis via DAP pathway; LL-2,6-diaminopimelate from (S)-tetrahydrodipicolinate (succinylase route): step 3/3. Its function is as follows. Catalyzes the hydrolysis of N-succinyl-L,L-diaminopimelic acid (SDAP), forming succinate and LL-2,6-diaminopimelate (DAP), an intermediate involved in the bacterial biosynthesis of lysine and meso-diaminopimelic acid, an essential component of bacterial cell walls. This is Succinyl-diaminopimelate desuccinylase from Cupriavidus taiwanensis (strain DSM 17343 / BCRC 17206 / CCUG 44338 / CIP 107171 / LMG 19424 / R1) (Ralstonia taiwanensis (strain LMG 19424)).